A 369-amino-acid polypeptide reads, in one-letter code: Phosphoribosylformylglycinamidine cyclo-ligase (369 aa).

Residues 1 to 22 (MSKRDTSQPKTGQPKTSKRRNG) form a disordered region.

The protein belongs to the AIR synthase family.

It localises to the cytoplasm. The enzyme catalyses 2-formamido-N(1)-(5-O-phospho-beta-D-ribosyl)acetamidine + ATP = 5-amino-1-(5-phospho-beta-D-ribosyl)imidazole + ADP + phosphate + H(+). Its pathway is purine metabolism; IMP biosynthesis via de novo pathway; 5-amino-1-(5-phospho-D-ribosyl)imidazole from N(2)-formyl-N(1)-(5-phospho-D-ribosyl)glycinamide: step 2/2. The sequence is that of Phosphoribosylformylglycinamidine cyclo-ligase from Mesorhizobium japonicum (strain LMG 29417 / CECT 9101 / MAFF 303099) (Mesorhizobium loti (strain MAFF 303099)).